The chain runs to 92 residues: NELL2-interacting cell ontogeny regulator 1 (92 aa).

The first 30 residues, 1–30 (MALPSAWSVMRVVIPFISVLGLLGVRLVGA), serve as a signal peptide directing secretion.

This sequence belongs to the NICOL family.

Its subcellular location is the secreted. The protein localises to the cytoplasm. It is found in the perinuclear region. Functionally, mRNA-binding protein which interacts with a range of target mRNAs and may promote extracellular matrix production. May function as a component of lumicrine signaling and may play a crucial role in epididymal-mediated sperm maturation and male fertility. In Gallus gallus (Chicken), this protein is NELL2-interacting cell ontogeny regulator 1.